A 233-amino-acid chain; its full sequence is uncharacterized protein (233 aa).

Transmembrane regions (helical) follow at residues 4–24, 35–55, and 66–86; these read LAIL…NHDT, FGQL…ILQS, and IAIW…RFEL.

The protein resides in the cell membrane. This is an uncharacterized protein from Sinorhizobium sp.